The sequence spans 127 residues: Large ribosomal subunit protein bL17 (127 aa).

This sequence belongs to the bacterial ribosomal protein bL17 family. In terms of assembly, part of the 50S ribosomal subunit. Contacts protein L32.

In Lactobacillus johnsonii (strain CNCM I-12250 / La1 / NCC 533), this protein is Large ribosomal subunit protein bL17.